Reading from the N-terminus, the 179-residue chain is Large ribosomal subunit protein uL5 (179 aa).

The protein belongs to the universal ribosomal protein uL5 family. In terms of assembly, part of the 50S ribosomal subunit; part of the 5S rRNA/L5/L18/L25 subcomplex. Contacts the 5S rRNA and the P site tRNA. Forms a bridge to the 30S subunit in the 70S ribosome.

This is one of the proteins that bind and probably mediate the attachment of the 5S RNA into the large ribosomal subunit, where it forms part of the central protuberance. In the 70S ribosome it contacts protein S13 of the 30S subunit (bridge B1b), connecting the 2 subunits; this bridge is implicated in subunit movement. Contacts the P site tRNA; the 5S rRNA and some of its associated proteins might help stabilize positioning of ribosome-bound tRNAs. This is Large ribosomal subunit protein uL5 from Actinobacillus pleuropneumoniae serotype 5b (strain L20).